We begin with the raw amino-acid sequence, 110 residues long: Thiosulfate sulfurtransferase GlpE (110 aa).

The Rhodanese domain maps to 19–107 (EDSLAVLVDI…WRRQALPIIQ (89 aa)). The active-site Cysteine persulfide intermediate is the Cys-67.

This sequence belongs to the GlpE family.

It localises to the cytoplasm. It catalyses the reaction thiosulfate + hydrogen cyanide = thiocyanate + sulfite + 2 H(+). The catalysed reaction is thiosulfate + [thioredoxin]-dithiol = [thioredoxin]-disulfide + hydrogen sulfide + sulfite + 2 H(+). Its function is as follows. Transferase that catalyzes the transfer of sulfur from thiosulfate to thiophilic acceptors such as cyanide or dithiols. May function in a CysM-independent thiosulfate assimilation pathway by catalyzing the conversion of thiosulfate to sulfite, which can then be used for L-cysteine biosynthesis. This Photobacterium profundum (strain SS9) protein is Thiosulfate sulfurtransferase GlpE.